The following is a 2242-amino-acid chain: MSHQAIGISNNFQQVQREQLNHQRLLQAQLQTNGPGSVSQQQQASQQQQQVQHVQQQQQSQQQQQQVASQQNQPQLQMNAQILQALSTPQGQNLVNMLLMQQALNAQQTDTQNPQQIMQHQLAQQQAQQAQQAQQAQQARQQAEQQAQAQARHQAEQQAQQQAQQQAQARQQEQQAQLAAIQQQVTPQQFAQILHMQQQLQQQQFQQQQLQQQQLQQQQLQQQQLQQQQLQQQQLQQVLQISQAQQQAQQAQHVQSRQMQPSQQSQVQAQLQQQQQLQQQQAQQLSQQQAQQQQQLQQLQLQQFLQQQQQLHQQRAAAQQAQAQNNASQQRPSVASTPALSSTPQLNDLTQTMQAQLQQQLLLQQQQAQAQQAQQAQQAQLAQQAQQQQQGQSQNRTVSQALQYIQSMQLQQRADGTPNAESQEERLAQMLNEQQQRMLQNQAREAQHRQLLISSTPAPRGGITMGTPIGIARREEQPVPSTVAVTTAPAAVRTPVAVPPMKQNSNPSMNPSSTSTSASATSSHQILAPSLSKPLEQPSSSKAASSGNESMSDHISRIISENEVILQGDPVIRKKRPYHRQIGAQSSVDHDSNSGGSTRTSPGPKDSRMLQAASRSQSLFELSGSKHFMGSLTSGQPLLRPIQAHNDPNYTPECIYCKLTFPNEAGLQAHEVVCGKKKELEKAQIAQEGNPHSALKRRHTHQDATLAMHSPLAAHTPSNMPGPSEPAIKLKKDDSTELDGTSKPDALQSSSSFPRSLPKEWEQHMLTLQNLAAIIPPFVQAFLAKVLQTKLTMVSSGTLTHIYENYNISPICVKQFLHFASQLTDQQLEEMTVESEKQYLENAEEYQAKGIIQALPCDNLEVTEMLKQQETIMKGQVPDLLVSTQAVLHHCSGKRDNKDPSKNFVMIKLLHANGKDITEIPMKAETDLDECNARFVYQMREFQKINNMNDRLIEVLKTDPAAAATPLFQVAREQSASVKFLIRQTGMVHLTIVASVAKRLGMSSMQQDVPESNQIPNGIIAFDGVQIKQEPEDPPGDDDDDDDDCIIEVVDEDQKQHIAMLTAAASGQDIGIGGQFQKVTQNLEPAIVNQQSIVNHGDSIVNNASIPIANNAPVQIVQNGGPMQHEVVAMPVQLKLEDLRLEPQTSGDTDKPYWLVINGDIGGRPSFMTTAGMTSRTHRTRNITSETYVTVPRQQPMFAVQDGTLSMYAKWNVPVHNDAETKMNLSFMGMVSLRRRTGQQKFFKYTTANKDQGHYRMTHSSFWDISTKIRDRQASMSEEKTPEESVDYDAQFIERLVGGTYTNTDLQGPSNAPVTIPVLVAPEDSTSAEPSTSGQSLLMRSPRPQSPPLRDIKMDLSDDDYSATDLATTCKLEPKQESFEDVKDVKRENSPDARPTVIISDDAGRIRRERFANKYISRIRPKHDQIIGGHRTDEVYVYVRGRGRGRYICDRCGIRCKKPSMLKKHIKSHTDVRAFNCTACNFSFKTKGNLTKHLSSKTHQRRISNIQAGNDSDGTTPSTSSMMNMDDGYHRNQPLFDDYDNNSSDEEDYDHLNRMQAEHKFKFGQEHILFERTAHTPPTRWCLVEAQNDHYWPSPDRRSCMSAPPVAMQRDFDDRAMTPVSGANSPYLSQQVHSPMSTSSQSNIILDIPNNQKSNCSSVSNVSPSNSQNFQSLSTVPTCASSSSNVLVPNVNFLQKDETLKCDQCDRTFRKISDLTLHQHTHNIEMQQSKNRMYQCSECKIPIRTKAQLQKHLERNHGVHMDESVTACIDPLASTQSVLGGPSTSNPRSFMCVDCDIGFRKHGILAKHLRSKTHVMKLESLQRLPVDTLSLITKKDNGACLNDIDTTDCEKARISLLAIVEKLRNEADKDEQGSVVPTTSIPAPQPVALTPEMIRALANAQTPVTASMTNTPSTAQFPVGVVSTPSVSAVSASGSQSNVSCVSSFNNSTMSPNPTVVPQVFPTPNPSSPLESSSMQFRKKAVLDSATHANDMPRTILRISEIPSSLPVNHQLHRDLSFLAHTTSRSESSITSPIVSSSTNFSYRKRSESSLSGSSPTHTKKLMVWNPPLAEPSFYSPKAALHPLSTDKAHASESLSDRLHNKRPRPIPDNTKCQICADEFSTPIELQVHLHVDHVRMMDGAEYKCPRKFCGLNYESLDSLRAHVTAHYETDRQKLLEEKVLLAEADFPIDNSKIEKLNSPKKESMNKFTTPFKAISDHHELYAQTQQGAGSSTSNQSPKAAN.

The stretch at H120–Q383 forms a coiled coil. Residues A317 to Q330 show a composition bias toward low complexity. 5 disordered regions span residues A317–P344, T494–D553, G583–Q617, L712–P754, and E1323–L1349. Polar residues predominate over residues R331–P344. Composition is skewed to low complexity over residues T494–S523 and S539–S550. Residues G583–S601 show a composition bias toward polar residues. Over residues D1324–L1338 the composition is skewed to polar residues. 5 consecutive C2H2-type zinc fingers follow at residues Y1447–H1469, F1475–H1499, L1700–H1722, Y1734–H1760, and F1790–H1814. Positions S2029–T2039 are enriched in low complexity. Disordered regions lie at residues S2029 to T2059 and S2085 to I2107. Residues S2085–L2099 are compositionally biased toward basic and acidic residues. C2H2-type zinc fingers lie at residues T2111 to H2134 and Y2143 to H2167. The interval H2219 to N2242 is disordered. A compositionally biased stretch (polar residues) spans A2223–N2242.

Expressed in the ventral nerve cord (VNC), pharynx, intestine and seam cells (at protein level).

The protein resides in the nucleus. Its function is as follows. Transcription factor, probably acting as a transcriptional activator and repressor, involved in the TGF-beta-like dbl-1 signaling pathway. Plays a role in regulation of body size, and patterning of male-specific genital sensilla (simple sense organs), known as rays, and mating-associated structures, spicules. Required for the dorsoventral patterning of the postembryonic mesodermal lineage (M lineage), acting by antagonizing the TGF-beta-like dbl-1 signaling pathway, in part by repressing expression of transcription factor unc-130. Involved in egg-laying, perhaps via modulation of cholinergic neurotransmission. Involved in production of reactive oxygen species (ROS), acting downstream of the dbl-1 signaling pathway. Plays a role in the mitochondrial unfolded protein response (mtUPR). May play a role in modulating lifespan and in responses to proteotoxic stress. Functionally, transcription factor, probably acting as a transcriptional activator. Required for patterning of male-specific genital sensilla (simple sense organs), known as rays. Dispensable for regulation of body size. The polypeptide is Transcription factor sma-9 (Caenorhabditis elegans).